A 142-amino-acid chain; its full sequence is Hemoglobin anodic subunit alpha (142 aa).

An N-acetylserine modification is found at Ser1. A Globin domain is found at 1-142 (SLSTKDKAVV…LALALADRYR (142 aa)). Position 59 (His59) interacts with O2. Heme b is bound at residue His88.

Belongs to the globin family. Heterotetramer of two alpha chains and two beta chains. In terms of tissue distribution, red blood cells.

Involved in oxygen transport from gills to the various peripheral tissues. The chain is Hemoglobin anodic subunit alpha from Gymnothorax unicolor (Brown moray).